The following is a 1937-amino-acid chain: Myosin-8 (1937 aa).

The 50-residue stretch at 35 to 84 (DAKTSVFVAEPKESYVKSTIQSKEGGKVTVKTEGGATLTVREDQVFPMNP) folds into the Myosin N-terminal SH3-like domain. A phosphothreonine mark is found at Thr66 and Thr71. The Myosin motor domain maps to 88–781 (DKIEDMAMMT…LLGLLEEMRD (694 aa)). Lys132 carries the post-translational modification N6,N6,N6-trimethyllysine. 181–188 (GESGAGKT) contributes to the ATP binding site. The residue at position 389 (Tyr389) is a Phosphotyrosine. Ser392 carries the post-translational modification Phosphoserine. Thr419 carries the post-translational modification Phosphothreonine. Phosphotyrosine is present on Tyr424. Position 625 is a phosphoserine (Ser625). The segment at 658–680 (LNKLMTNLRSTHPHFVRCIIPNE) is actin-binding. Position 756 is a pros-methylhistidine (His756). The actin-binding stretch occupies residues 760–774 (KFGHTKVFFKAGLLG). The 33-residue stretch at 781–813 (DEKLAQIITRTQAVCRGFLMRVEYQKMLQRREA) folds into the IQ domain. Residues 842–1937 (LLKSAETEKE…REVHTKISAE (1096 aa)) adopt a coiled-coil conformation. Ser1091 and Ser1095 each carry phosphoserine. The interval 1126–1146 (EAERASRAKAEKQRSDLSREL) is disordered. The segment covering 1127-1146 (AERASRAKAEKQRSDLSREL) has biased composition (basic and acidic residues). Ser1161, Ser1236, Ser1242, and Ser1260 each carry phosphoserine. Phosphothreonine is present on residues Thr1264 and Thr1285. Phosphoserine is present on residues Ser1291, Ser1302, and Ser1305. Tyr1463 carries the post-translational modification Phosphotyrosine. Position 1466 is a phosphothreonine (Thr1466). Ser1473 is subject to Phosphoserine. Tyr1491 carries the phosphotyrosine modification. Ser1494 is modified (phosphoserine). A Phosphothreonine modification is found at Thr1500. Ser1513 carries the phosphoserine modification. Thr1516 is subject to Phosphothreonine. Phosphoserine is present on residues Ser1553, Ser1573, Ser1602, Ser1713, and Ser1725. At Thr1729 the chain carries Phosphothreonine. Residue Ser1738 is modified to Phosphoserine.

It belongs to the TRAFAC class myosin-kinesin ATPase superfamily. Myosin family. In terms of assembly, muscle myosin is a hexameric protein that consists of 2 heavy chain subunits (MHC), 2 alkali light chain subunits (MLC) and 2 regulatory light chain subunits (MLC-2).

It is found in the cytoplasm. The protein resides in the myofibril. In terms of biological role, muscle contraction. This is Myosin-8 (MYH8) from Homo sapiens (Human).